The sequence spans 1313 residues: Kinesin-like protein KIN-12B (1313 aa).

The interval 1–74 (MKHFMMPRNA…PPRPPSSNPL (74 aa)) is disordered. Residues 17 to 26 (ESQSPNPSLT) show a composition bias toward polar residues. The 336-residue stretch at 96–431 (GVKVIVRMKP…LRFAQRAKAI (336 aa)) folds into the Kinesin motor domain. 170 to 177 (GQTGSGKT) contacts ATP. 3 microtubules-binding regions span residues 298–302 (SSRSH), 331–337 (VDLAGSE), and 380–384 (HIPYR). The tract at residues 429–467 (KAIQNKAIVNEVMQDDVNFLREVIRQLRDELQRVKDDKG) is neck. The tract at residues 685–709 (ESASPKIRNSRKSLRTTSMSTASQK) is disordered. Residues 699–708 (RTTSMSTASQ) show a composition bias toward polar residues. Coiled-coil stretches lie at residues 932–1003 (LDEE…YTDS), 1062–1130 (AEEL…RIRE), and 1167–1241 (EKEV…TEIS).

It belongs to the TRAFAC class myosin-kinesin ATPase superfamily. Kinesin family. KIN-12 subfamily. In terms of assembly, homodimer and heterodimer with KIN12A. Interacts with TIO.

The protein localises to the cytoplasm. The protein resides in the cytoskeleton. Its subcellular location is the phragmoplast. Functionally, plus-end directed kinesin-like motor enzyme that plays a critical role in the organization of phragmoplast microtubules during cytokinesis. Constitutes a signaling module in association with serine/threonine-protein kinase TIO that is required to support phragmoplast expansion and cell-plate growth in plant cells. This chain is Kinesin-like protein KIN-12B, found in Arabidopsis thaliana (Mouse-ear cress).